The chain runs to 274 residues: Nitrate import ATP-binding protein NrtD (274 aa).

One can recognise an ABC transporter domain in the interval 17–250; the sequence is LHFDCVGKTF…RPREREAVVE (234 aa). Residue 53–60 coordinates ATP; sequence GHSGCGKS.

Belongs to the ABC transporter superfamily. Nitrate/nitrite/cyanate uptake transporter (NitT) (TC 3.A.1.16) family. The complex is composed of two ATP-binding proteins (NrtC and NrtD), two transmembrane proteins (NrtB) and a solute-binding protein (NrtA).

It localises to the cell inner membrane. The catalysed reaction is nitrate(out) + ATP + H2O = nitrate(in) + ADP + phosphate + H(+). Functionally, part of the ABC transporter complex NrtABCD involved in nitrate uptake. The complex is probably also involved in nitrite transport. Probably responsible for energy coupling to the transport system. The polypeptide is Nitrate import ATP-binding protein NrtD (Synechococcus elongatus (strain ATCC 33912 / PCC 7942 / FACHB-805) (Anacystis nidulans R2)).